The chain runs to 436 residues: 3-ketoacyl-CoA thiolase (436 aa).

Cys99 (acyl-thioester intermediate) is an active-site residue. Catalysis depends on proton acceptor residues His392 and Cys422.

It belongs to the thiolase-like superfamily. Thiolase family. In terms of assembly, heterotetramer of two alpha chains (FadJ) and two beta chains (FadI).

The protein localises to the cytoplasm. It carries out the reaction an acyl-CoA + acetyl-CoA = a 3-oxoacyl-CoA + CoA. Its pathway is lipid metabolism; fatty acid beta-oxidation. Its function is as follows. Catalyzes the final step of fatty acid oxidation in which acetyl-CoA is released and the CoA ester of a fatty acid two carbons shorter is formed. The polypeptide is 3-ketoacyl-CoA thiolase (Alteromonas mediterranea (strain DSM 17117 / CIP 110805 / LMG 28347 / Deep ecotype)).